Consider the following 483-residue polypeptide: Essential nuclear protein 1 (483 aa).

4 disordered regions span residues 1–21 (MARA…LKDL), 33–55 (KKKL…GYID), 67–123 (KEQQ…EGDY), and 171–200 (ESQV…GLKS). A compositionally biased stretch (acidic residues) spans 96-123 (YDDEDEDEDEDEEAFGEDISDFEPEGDY). Position 172 is a phosphoserine; by ATM or ATR (Ser-172). Over residues 174-183 (VEDMQDDEPL) the composition is skewed to acidic residues. Positions 185–198 (NEQNTSRGNISSGL) are enriched in polar residues. Phosphoserine is present on residues Ser-190 and Ser-404.

It belongs to the bystin family.

Its subcellular location is the cytoplasm. The protein localises to the nucleus. It is found in the nucleolus. Functionally, required for normal export of the pre-40S particles from the nucleus to the cytoplasm. Its subcellular location and association with pre-40S subunit shifts from mixed cytoplasm/nucleus to all nuclear in RPS19 disruptions, suggesting it acts after the ribosomal protein. This Saccharomyces cerevisiae (strain ATCC 204508 / S288c) (Baker's yeast) protein is Essential nuclear protein 1 (ENP1).